Consider the following 171-residue polypeptide: MTKQHAFTREDLLRCSRGELFGPGNAQLPAPNMLMVDRITHISEEGGKYGKGELVAELDITPDLWFFACHFEGDPVMPGCLGLDAMWQLVGFFLGWQGLPGRGRALGSGEVKFFGQVLPTAKKVTYNIHIKRVLKGKLNMAIADGSVSVDGREIYTAEALRVGVFTSTDNF.

His70 is an active-site residue.

It belongs to the thioester dehydratase family. FabA subfamily. As to quaternary structure, homodimer.

The protein resides in the cytoplasm. The catalysed reaction is a (3R)-hydroxyacyl-[ACP] = a (2E)-enoyl-[ACP] + H2O. It carries out the reaction (3R)-hydroxydecanoyl-[ACP] = (2E)-decenoyl-[ACP] + H2O. It catalyses the reaction (2E)-decenoyl-[ACP] = (3Z)-decenoyl-[ACP]. It participates in lipid metabolism; fatty acid biosynthesis. In terms of biological role, necessary for the introduction of cis unsaturation into fatty acids. Catalyzes the dehydration of (3R)-3-hydroxydecanoyl-ACP to E-(2)-decenoyl-ACP and then its isomerization to Z-(3)-decenoyl-ACP. Can catalyze the dehydratase reaction for beta-hydroxyacyl-ACPs with saturated chain lengths up to 16:0, being most active on intermediate chain length. The sequence is that of 3-hydroxydecanoyl-[acyl-carrier-protein] dehydratase from Pseudomonas putida (strain W619).